The primary structure comprises 359 residues: S-adenosylmethionine:tRNA ribosyltransferase-isomerase (359 aa).

The protein belongs to the QueA family. In terms of assembly, monomer.

It localises to the cytoplasm. The catalysed reaction is 7-aminomethyl-7-carbaguanosine(34) in tRNA + S-adenosyl-L-methionine = epoxyqueuosine(34) in tRNA + adenine + L-methionine + 2 H(+). It functions in the pathway tRNA modification; tRNA-queuosine biosynthesis. Transfers and isomerizes the ribose moiety from AdoMet to the 7-aminomethyl group of 7-deazaguanine (preQ1-tRNA) to give epoxyqueuosine (oQ-tRNA). This Colwellia psychrerythraea (strain 34H / ATCC BAA-681) (Vibrio psychroerythus) protein is S-adenosylmethionine:tRNA ribosyltransferase-isomerase.